Consider the following 154-residue polypeptide: Peptidoglycan amidase Tse1 (154 aa).

Cysteine 7 and cysteine 148 are oxidised to a cystine. Cysteine 30 acts as the Nucleophile in catalysis. The active-site Proton acceptor is histidine 91.

Forms a heterotetramer with Tsi1 consisting of two Tse1 dimers and two Tsi1 dimers. Formation of the complex inactivates Tse1 enzymatic activity.

It localises to the host membrane. It is found in the secreted. The catalysed reaction is Hydrolysis of gamma-D-glutamyl bonds to the L-terminus (position 7) of meso-diaminopimelic acid (meso-A2pm) in 7-(L-Ala-gamma-D-Glu)-meso-A2pm and 7-(L-Ala-gamma-D-Glu)-7-(D-Ala)-meso-A2pm. It is required that the D-terminal amino and carboxy groups of meso-A2pm are unsubstituted.. Toxin secreted by the H1 type VI (H1-T6SS) secretion system into the periplasm of recipient cells. Degrades peptidoglycan via amidase activity thereby helping itself to compete with other bacteria. To protect itself, the bacterium synthesizes immunity protein Tsi1 that specifically interacts with and inactivates cognate toxin. The chain is Peptidoglycan amidase Tse1 from Pseudomonas aeruginosa (strain ATCC 15692 / DSM 22644 / CIP 104116 / JCM 14847 / LMG 12228 / 1C / PRS 101 / PAO1).